Consider the following 47-residue polypeptide: Defensin Ec-AMP-D1 (47 aa).

4 disulfides stabilise this stretch: Cys3/Cys47, Cys14/Cys34, Cys20/Cys41, and Cys24/Cys43.

Functionally, has antifungal activity. Inhibits spore germination in F.graminearum (IC(50)=15 ug/ml), F.oxysporum (IC(50)=102 ug/ml), F.verticillioides (IC(50)=8.5 ug/ml) and D.maydis (IC(50)=12.5 ug/ml), but not in C.graminicola, B.cinerea and H.sativum at concentrations below 30 ug/ml. Inhibits hyphal development in P.infestans (IC(50)=25.5 ug/ml), but not release of zoospores. At concentrations above 100 ug/ml, induces morphological changes such as lysis of hyphae and sporangia in P.infestans. The protein is Defensin Ec-AMP-D1 of Echinochloa crus-galli (Barnyard grass).